A 158-amino-acid chain; its full sequence is MAKSNYITRSGWNALDQELKFLWKDERPKVTQAVSDAAALGDRSENAEYIYGKRRLREIDRRVRFLTKRLEVLQIVDYHPKQEGKVFFGAWVALENEAGEEKHYRIVGCDEFDPAKNWISIDSPVARALIGKSIDDEIKVETPSGLVILYINQIWYEK.

Residues 53 to 75 (KRRLREIDRRVRFLTKRLEVLQI) adopt a coiled-coil conformation.

It belongs to the GreA/GreB family. GreB subfamily.

Functionally, necessary for efficient RNA polymerase transcription elongation past template-encoded arresting sites. The arresting sites in DNA have the property of trapping a certain fraction of elongating RNA polymerases that pass through, resulting in locked ternary complexes. Cleavage of the nascent transcript by cleavage factors such as GreA or GreB allows the resumption of elongation from the new 3'terminus. GreB releases sequences of up to 9 nucleotides in length. This chain is Transcription elongation factor GreB, found in Pasteurella multocida (strain Pm70).